Consider the following 276-residue polypeptide: MKLKTILCAALLLVAGQAAAQEKSITIATEGGYAPWNFSGPGGKLDGFEIDLANALCEKMKAKCQIVAQNWDGIMPSLTGKKYDAIMAAMSVTPKRQEVIGFSIPYAAGINGFAVMGDSKLAEMPGLGETYSLDSQADAAKKAIADISSFLNGTTVGVQGSTTASTFLDKYFKGSVDIKEYKSVEEHNLDLTSGRLDAVLANATVLAAAIEKPEMKGAKLVGPLFSGGEFGVVAVGLRKEDTALKADFDAAIKAASEDGTIKTLSLKWFKVDVTPQ.

Positions 1-20 (MKLKTILCAALLLVAGQAAA) are cleaved as a signal peptide. A disulfide bond links cysteine 57 and cysteine 64.

This sequence belongs to the bacterial solute-binding protein 3 family.

It localises to the periplasm. In terms of biological role, component of the octopine active transport system probably consisting of four subunits: Q, M, P and T. The polypeptide is Octopine-binding periplasmic protein (occT) (Agrobacterium tumefaciens (strain Ach5)).